The following is a 280-amino-acid chain: Phosphatidylglycerol--prolipoprotein diacylglyceryl transferase (280 aa).

4 helical membrane-spanning segments follow: residues 12-32 (FGPFVLRWYGLLIAAAVLIGL), 52-72 (LLPLLVLFSVIGARIYYVAFE), 86-106 (IWEGGIAIHGALIAGTLTLIL), and 115-133 (FWDVLDVLVPSVALGQSIG). Arg-134 contributes to the a 1,2-diacyl-sn-glycero-3-phospho-(1'-sn-glycerol) binding site. 3 consecutive transmembrane segments (helical) span residues 173 to 193 (PTFLYESLWNLALFIILILLF), 203 to 223 (LPAGAMSCIYLMGYSLGRVWI), and 246 to 266 (IAQLMSGVMALAGSLGLWWLY).

Belongs to the Lgt family.

It localises to the cell inner membrane. It carries out the reaction L-cysteinyl-[prolipoprotein] + a 1,2-diacyl-sn-glycero-3-phospho-(1'-sn-glycerol) = an S-1,2-diacyl-sn-glyceryl-L-cysteinyl-[prolipoprotein] + sn-glycerol 1-phosphate + H(+). It participates in protein modification; lipoprotein biosynthesis (diacylglyceryl transfer). In terms of biological role, catalyzes the transfer of the diacylglyceryl group from phosphatidylglycerol to the sulfhydryl group of the N-terminal cysteine of a prolipoprotein, the first step in the formation of mature lipoproteins. The sequence is that of Phosphatidylglycerol--prolipoprotein diacylglyceryl transferase from Synechococcus sp. (strain CC9902).